A 101-amino-acid polypeptide reads, in one-letter code: Urease subunit beta (101 aa).

This sequence belongs to the urease beta subunit family. As to quaternary structure, heterotrimer of UreA (gamma), UreB (beta) and UreC (alpha) subunits. Three heterotrimers associate to form the active enzyme.

It is found in the cytoplasm. The enzyme catalyses urea + 2 H2O + H(+) = hydrogencarbonate + 2 NH4(+). It participates in nitrogen metabolism; urea degradation; CO(2) and NH(3) from urea (urease route): step 1/1. The chain is Urease subunit beta from Mesorhizobium japonicum (strain LMG 29417 / CECT 9101 / MAFF 303099) (Mesorhizobium loti (strain MAFF 303099)).